Here is a 202-residue protein sequence, read N- to C-terminus: MDAKRTPPPPTPPNPNPSVIGSGAAADGGGFGRGEAAAATKHMLAFHFLRALSRIHRATPVTRRTRTIRRAAYSSMARAASPRRAWSRALLGQARARRSRTLMRRAAVLVRRRVVAAPAPSPASARGVRIIAAGETSAAARAVPPPPRQQGEPPRADALRRLVPGGAGMEYSSLLEETADYLRSLRAQVQLMQGLVDLFSYQ.

Residues 1-16 are compositionally biased toward pro residues; the sequence is MDAKRTPPPPTPPNPN. Residues 1–33 form a disordered region; that stretch reads MDAKRTPPPPTPPNPNPSVIGSGAAADGGGFGR. Positions 136–185 constitute a bHLH domain; the sequence is TSAAARAVPPPPRQQGEPPRADALRRLVPGGAGMEYSSLLEETADYLRSL.

The protein belongs to the bHLH protein family. In terms of assembly, interacts with ILI1.

Functionally, atypical and probable non DNA-binding bHLH transcription factor that acts as a negative regulator of cell elongation and plant development. Binds the transcription factor ILI1 and forms a heterodimer of antagonistic bHLH transcription factors that function downstream of BZR1 to mediate brassinosteroid regulation of cell elongation and lamina inclination. The sequence is that of Transcription factor IBH1 (IBH1) from Oryza sativa subsp. indica (Rice).